Reading from the N-terminus, the 214-residue chain is UPF0301 protein blr1492 (214 aa).

The disordered stretch occupies residues 1-22 (MAPTGKRTGESTRSTGPAPPSS).

The protein belongs to the UPF0301 (AlgH) family.

The polypeptide is UPF0301 protein blr1492 (Bradyrhizobium diazoefficiens (strain JCM 10833 / BCRC 13528 / IAM 13628 / NBRC 14792 / USDA 110)).